The primary structure comprises 363 residues: 3-isopropylmalate dehydrogenase A (363 aa).

Residue 78-89 coordinates NAD(+); it reads GPKWGTGAVRPE. Substrate contacts are provided by Arg96, Arg106, Arg135, and Asp222. Mg(2+)-binding residues include Asp222, Asp247, and Asp251. 287–299 is a binding site for NAD(+); sequence GSAPDIAGKGIVN.

The protein belongs to the isocitrate and isopropylmalate dehydrogenases family. In terms of assembly, homodimer. Mg(2+) serves as cofactor. Requires Mn(2+) as cofactor.

Its subcellular location is the cytoplasm. It catalyses the reaction (2R,3S)-3-isopropylmalate + NAD(+) = 4-methyl-2-oxopentanoate + CO2 + NADH. It participates in amino-acid biosynthesis; L-leucine biosynthesis; L-leucine from 3-methyl-2-oxobutanoate: step 3/4. Its function is as follows. Catalyzes the oxidation of 3-carboxy-2-hydroxy-4-methylpentanoate (3-isopropylmalate) to 3-carboxy-4-methyl-2-oxopentanoate. The product decarboxylates to 4-methyl-2 oxopentanoate. The polypeptide is 3-isopropylmalate dehydrogenase A (leu2A) (Aspergillus niger).